The sequence spans 151 residues: Caveolin-3 (151 aa).

Residues 1-83 lie on the Cytoplasmic side of the membrane; the sequence is MMTEEHTDLE…RLLSTLLGVP (83 aa). Lys38 participates in a covalent cross-link: Glycyl lysine isopeptide (Lys-Gly) (interchain with G-Cter in SUMO3). Residues 84–104 constitute an intramembrane region (helical); sequence LALLWGFLFACISFCHIWAVV. Residues 105 to 151 lie on the Cytoplasmic side of the membrane; sequence PCIKSYLIEIQCISHIYSLCIRTFCNPLFAALGQVCSNIKVVLRREG.

Belongs to the caveolin family. As to quaternary structure, homooligomer. Interacts with DYSF. Interacts with DLG1 and KCNA5; forms a ternary complex. Interacts with DAG1 (via its C-terminal); the interaction prevents binding of DAG1 with DMD. Interacts with TRIM72. Interacts with MUSK; may regulate MUSK signaling. Interacts with POPDC1. Interacts with CAVIN1, CAVIN2 and CAVIN4. Sumoylation with SUMO3 by PIAS4 may reduce agonist-induced internalization and desensitization of adrenergic receptor ABRD2. Expressed predominantly in muscle.

The protein resides in the golgi apparatus membrane. It is found in the cell membrane. It localises to the membrane. The protein localises to the caveola. Its subcellular location is the sarcolemma. Its function is as follows. May act as a scaffolding protein within caveolar membranes. Interacts directly with G-protein alpha subunits and can functionally regulate their activity. May also regulate voltage-gated potassium channels. Plays a role in the sarcolemma repair mechanism of both skeletal muscle and cardiomyocytes that permits rapid resealing of membranes disrupted by mechanical stress. Mediates the recruitment of CAVIN2 and CAVIN3 proteins to the caveolae. The sequence is that of Caveolin-3 (Cav3) from Rattus norvegicus (Rat).